Reading from the N-terminus, the 331-residue chain is Elongation factor Ts, mitochondrial (331 aa).

The N-terminal 14 residues, 1–14, are a transit peptide targeting the mitochondrion; the sequence is MIVSRQVIRSVVRK.

Belongs to the EF-Ts family.

Its subcellular location is the mitochondrion. Associates with the EF-Tu.GDP complex and induces the exchange of GDP to GTP. It remains bound to the aminoacyl-tRNA.EF-Tu.GTP complex up to the GTP hydrolysis stage on the ribosome. The protein is Elongation factor Ts, mitochondrial of Brugia malayi (Filarial nematode worm).